The following is a 434-amino-acid chain: Mannose-6-phosphate isomerase (434 aa).

Zn(2+) contacts are provided by Gln-109, His-111, and Glu-136. A compositionally biased stretch (polar residues) spans 181–191; the sequence is SLGLPTSQPPD. Residues 181–200 form a disordered region; sequence SLGLPTSQPPDTSLFKPTES. His-291 lines the Zn(2+) pocket. Arg-310 is an active-site residue.

The protein belongs to the mannose-6-phosphate isomerase type 1 family. Requires Zn(2+) as cofactor.

Its subcellular location is the cytoplasm. It carries out the reaction D-mannose 6-phosphate = D-fructose 6-phosphate. It functions in the pathway nucleotide-sugar biosynthesis; GDP-alpha-D-mannose biosynthesis; alpha-D-mannose 1-phosphate from D-fructose 6-phosphate: step 1/2. Functionally, involved in the synthesis of the GDP-mannose and dolichol-phosphate-mannose required for a number of critical mannosyl transfer reactions. The polypeptide is Mannose-6-phosphate isomerase (MAN1) (Cryptococcus neoformans var. neoformans serotype D (strain JEC21 / ATCC MYA-565) (Filobasidiella neoformans)).